Reading from the N-terminus, the 372-residue chain is Uroporphyrinogen decarboxylase (372 aa).

Residues 35–39 (RQAGR), Asp85, Tyr166, Ser221, and His342 each bind substrate.

This sequence belongs to the uroporphyrinogen decarboxylase family. Homodimer.

The protein localises to the cytoplasm. The catalysed reaction is uroporphyrinogen III + 4 H(+) = coproporphyrinogen III + 4 CO2. It functions in the pathway porphyrin-containing compound metabolism; protoporphyrin-IX biosynthesis; coproporphyrinogen-III from 5-aminolevulinate: step 4/4. Its function is as follows. Catalyzes the decarboxylation of four acetate groups of uroporphyrinogen-III to yield coproporphyrinogen-III. This Methylibium petroleiphilum (strain ATCC BAA-1232 / LMG 22953 / PM1) protein is Uroporphyrinogen decarboxylase.